The primary structure comprises 191 residues: Peptidyl-tRNA hydrolase (191 aa).

Position 15 (Y15) interacts with tRNA. The active-site Proton acceptor is the H20. TRNA-binding residues include F66, N68, and N114.

It belongs to the PTH family. In terms of assembly, monomer.

It localises to the cytoplasm. It catalyses the reaction an N-acyl-L-alpha-aminoacyl-tRNA + H2O = an N-acyl-L-amino acid + a tRNA + H(+). Hydrolyzes ribosome-free peptidyl-tRNAs (with 1 or more amino acids incorporated), which drop off the ribosome during protein synthesis, or as a result of ribosome stalling. Functionally, catalyzes the release of premature peptidyl moieties from peptidyl-tRNA molecules trapped in stalled 50S ribosomal subunits, and thus maintains levels of free tRNAs and 50S ribosomes. In Streptococcus agalactiae serotype III (strain NEM316), this protein is Peptidyl-tRNA hydrolase.